The sequence spans 454 residues: tRNA modification GTPase MnmE (454 aa).

Arg-23, Glu-80, and Lys-120 together coordinate (6S)-5-formyl-5,6,7,8-tetrahydrofolate. Residues 216-377 (GMKVVIAGRP…LRNHLKQSMG (162 aa)) enclose the TrmE-type G domain. K(+) is bound at residue Asn-226. GTP contacts are provided by residues 226-231 (NAGKSS), 245-251 (TDIAGTT), 270-273 (DTAG), 335-338 (NKAD), and 358-360 (SAR). Residue Ser-230 coordinates Mg(2+). 3 residues coordinate K(+): Thr-245, Ile-247, and Thr-250. Residue Thr-251 coordinates Mg(2+). A (6S)-5-formyl-5,6,7,8-tetrahydrofolate-binding site is contributed by Lys-454.

The protein belongs to the TRAFAC class TrmE-Era-EngA-EngB-Septin-like GTPase superfamily. TrmE GTPase family. Homodimer. Heterotetramer of two MnmE and two MnmG subunits. It depends on K(+) as a cofactor.

It localises to the cytoplasm. In terms of biological role, exhibits a very high intrinsic GTPase hydrolysis rate. Involved in the addition of a carboxymethylaminomethyl (cmnm) group at the wobble position (U34) of certain tRNAs, forming tRNA-cmnm(5)s(2)U34. The protein is tRNA modification GTPase MnmE of Salmonella gallinarum (strain 287/91 / NCTC 13346).